Here is a 220-residue protein sequence, read N- to C-terminus: Tegument protein UL51 homolog (220 aa).

The S-palmitoyl cysteine; by host moiety is linked to residue cysteine 11.

The protein belongs to the herpesviridae UL51 family. In terms of assembly, oligomerizes. Interacts with UL7 homolog; this interaction mediates UL7 homolog incorporation to virions. Post-translationally, phosphorylated. Palmitoylation is necessary for Golgi localization.

It localises to the virion tegument. The protein localises to the host cytoplasm. Its subcellular location is the host Golgi apparatus. Functionally, plays several roles during the time course of infection, including egress of virus particles from the perinuclear space and secondary envelopment of cytoplasmic capsids that bud into specific trans-Golgi network (TGN)-derived membranes. This is Tegument protein UL51 homolog (55) from Connochaetes taurinus (Blue wildebeest).